The chain runs to 418 residues: D-amino acid dehydrogenase (418 aa).

3–17 (VLVLGAGVAGVSSAW) contacts FAD.

Belongs to the DadA oxidoreductase family. FAD serves as cofactor.

It carries out the reaction a D-alpha-amino acid + A + H2O = a 2-oxocarboxylate + AH2 + NH4(+). It functions in the pathway amino-acid degradation; D-alanine degradation; NH(3) and pyruvate from D-alanine: step 1/1. Its function is as follows. Oxidative deamination of D-amino acids. The sequence is that of D-amino acid dehydrogenase from Neisseria meningitidis serogroup C / serotype 2a (strain ATCC 700532 / DSM 15464 / FAM18).